Consider the following 383-residue polypeptide: Cytochrome b (383 aa).

The next 4 helical transmembrane spans lie at 32–52, 76–98, 113–133, and 179–199; these read VGSLLGLCLVMQMASGMFLAM, WLMRYIHANGASFFFMCLYLHMG, VWSMGVMMFMLTMATAFMGYC, and FFALHYLLPFILAALVVMHFM. Heme b contacts are provided by His-82 and His-96. Residues His-183 and His-197 each contribute to the heme b site. Position 202 (His-202) interacts with a ubiquinone. 4 helical membrane-spanning segments follow: residues 225–245, 289–309, 321–341, and 348–368; these read FVFKDLMTVFVFILMFSLFVF, LGGVMAMFAALLMLLMLPMTD, LSKLSFYLFLFNFFLLMNMGQ, and FIELGQFATVYYFSYFLMLVP.

Belongs to the cytochrome b family. As to quaternary structure, fungal cytochrome b-c1 complex contains 10 subunits; 3 respiratory subunits, 2 core proteins and 5 low-molecular weight proteins. Cytochrome b-c1 complex is a homodimer. It depends on heme b as a cofactor.

The protein localises to the mitochondrion inner membrane. Its function is as follows. Component of the ubiquinol-cytochrome c reductase complex (complex III or cytochrome b-c1 complex) that is part of the mitochondrial respiratory chain. The b-c1 complex mediates electron transfer from ubiquinol to cytochrome c. Contributes to the generation of a proton gradient across the mitochondrial membrane that is then used for ATP synthesis. The protein is Cytochrome b (COB) of Debaryomyces hansenii (strain ATCC 36239 / CBS 767 / BCRC 21394 / JCM 1990 / NBRC 0083 / IGC 2968) (Yeast).